The primary structure comprises 230 residues: Lipoprotein-releasing system ATP-binding protein LolD (230 aa).

The ABC transporter domain maps to 6–230 (LQASNLEKEY…GHFILPSETL (225 aa)). 42–49 (GSSGSGKS) provides a ligand contact to ATP.

This sequence belongs to the ABC transporter superfamily. Lipoprotein translocase (TC 3.A.1.125) family. The complex is composed of two ATP-binding proteins (LolD) and two transmembrane proteins (LolC and LolE).

The protein localises to the cell inner membrane. Its function is as follows. Part of the ABC transporter complex LolCDE involved in the translocation of mature outer membrane-directed lipoproteins, from the inner membrane to the periplasmic chaperone, LolA. Responsible for the formation of the LolA-lipoprotein complex in an ATP-dependent manner. This is Lipoprotein-releasing system ATP-binding protein LolD from Hydrogenovibrio crunogenus (strain DSM 25203 / XCL-2) (Thiomicrospira crunogena).